A 361-amino-acid polypeptide reads, in one-letter code: Tryptophan--tRNA ligase, mitochondrial (361 aa).

The N-terminal 16 residues, 1-16 (MAKLPKITSLLPHSRV), are a transit peptide targeting the mitochondrion. ATP is bound by residues glutamine 21 and 27–30 (HIGN). A 'HIGH' region motif is present at residues 22–30 (PTGIPHIGN). Aspartate 165 is a binding site for L-tryptophan. ATP contacts are provided by residues 177–179 (GKD), 225–229 (KMSKS), and lysine 228. The short motif at 225-229 (KMSKS) is the 'KMSKS' region element.

This sequence belongs to the class-I aminoacyl-tRNA synthetase family. Homodimer.

It localises to the mitochondrion matrix. It catalyses the reaction tRNA(Trp) + L-tryptophan + ATP = L-tryptophyl-tRNA(Trp) + AMP + diphosphate + H(+). In Schizosaccharomyces pombe (strain 972 / ATCC 24843) (Fission yeast), this protein is Tryptophan--tRNA ligase, mitochondrial.